The chain runs to 210 residues: ATP-dependent Clp protease proteolytic subunit (210 aa).

The Nucleophile role is filled by Ser107. His132 is an active-site residue.

Belongs to the peptidase S14 family. Fourteen ClpP subunits assemble into 2 heptameric rings which stack back to back to give a disk-like structure with a central cavity, resembling the structure of eukaryotic proteasomes.

The protein resides in the cytoplasm. It catalyses the reaction Hydrolysis of proteins to small peptides in the presence of ATP and magnesium. alpha-casein is the usual test substrate. In the absence of ATP, only oligopeptides shorter than five residues are hydrolyzed (such as succinyl-Leu-Tyr-|-NHMec, and Leu-Tyr-Leu-|-Tyr-Trp, in which cleavage of the -Tyr-|-Leu- and -Tyr-|-Trp bonds also occurs).. Cleaves peptides in various proteins in a process that requires ATP hydrolysis. Has a chymotrypsin-like activity. Plays a major role in the degradation of misfolded proteins. This Azorhizobium caulinodans (strain ATCC 43989 / DSM 5975 / JCM 20966 / LMG 6465 / NBRC 14845 / NCIMB 13405 / ORS 571) protein is ATP-dependent Clp protease proteolytic subunit.